Here is a 449-residue protein sequence, read N- to C-terminus: Exodeoxyribonuclease 7 large subunit (449 aa).

It belongs to the XseA family. Heterooligomer composed of large and small subunits.

The protein localises to the cytoplasm. The catalysed reaction is Exonucleolytic cleavage in either 5'- to 3'- or 3'- to 5'-direction to yield nucleoside 5'-phosphates.. Its function is as follows. Bidirectionally degrades single-stranded DNA into large acid-insoluble oligonucleotides, which are then degraded further into small acid-soluble oligonucleotides. The protein is Exodeoxyribonuclease 7 large subunit of Salmonella typhi.